Consider the following 215-residue polypeptide: 3-isopropylmalate dehydratase small subunit (215 aa).

The protein belongs to the LeuD family. LeuD type 1 subfamily. Heterodimer of LeuC and LeuD.

The enzyme catalyses (2R,3S)-3-isopropylmalate = (2S)-2-isopropylmalate. It functions in the pathway amino-acid biosynthesis; L-leucine biosynthesis; L-leucine from 3-methyl-2-oxobutanoate: step 2/4. Its function is as follows. Catalyzes the isomerization between 2-isopropylmalate and 3-isopropylmalate, via the formation of 2-isopropylmaleate. In Xanthomonas euvesicatoria pv. vesicatoria (strain 85-10) (Xanthomonas campestris pv. vesicatoria), this protein is 3-isopropylmalate dehydratase small subunit.